A 225-amino-acid chain; its full sequence is Ribose-5-phosphate isomerase A (225 aa).

Substrate-binding positions include 32 to 35 (TGST), 85 to 88 (DGAD), and 98 to 101 (KGGG). The active-site Proton acceptor is Glu-107. Lys-125 contacts substrate.

This sequence belongs to the ribose 5-phosphate isomerase family. Homodimer.

The enzyme catalyses aldehydo-D-ribose 5-phosphate = D-ribulose 5-phosphate. It participates in carbohydrate degradation; pentose phosphate pathway; D-ribose 5-phosphate from D-ribulose 5-phosphate (non-oxidative stage): step 1/1. Functionally, catalyzes the reversible conversion of ribose-5-phosphate to ribulose 5-phosphate. The sequence is that of Ribose-5-phosphate isomerase A from Marinobacter nauticus (strain ATCC 700491 / DSM 11845 / VT8) (Marinobacter aquaeolei).